Reading from the N-terminus, the 344-residue chain is 1-acyl-sn-glycerol-3-phosphate acyltransferase BAT2, chloroplastic (344 aa).

A chloroplast-targeting transit peptide spans 1–49 (MDVASAPGVSSHPPYYSKPICSSQSSLIRIPINKGCCFARSSNLITSLH). The chain crosses the membrane as a helical span at residues 113-133 (GICFCLVAGVSAIVLIVLMIT). Residues 188 to 193 (HQSFLD) carry the HXXXXD motif motif. The chain crosses the membrane as a helical span at residues 210 to 230 (TGIFVIPVIGWAMSMMGVVPL).

Belongs to the 1-acyl-sn-glycerol-3-phosphate acyltransferase family. In terms of tissue distribution, widely expressed.

The protein localises to the plastid. It localises to the chloroplast membrane. It carries out the reaction a fatty acyl-[ACP] + a 1-acyl-sn-glycero-3-phosphate = a 1,2-diacyl-sn-glycero-3-phosphate + holo-[ACP]. It catalyses the reaction a 1-acyl-sn-glycero-3-phosphate + an acyl-CoA = a 1,2-diacyl-sn-glycero-3-phosphate + CoA. The protein operates within phospholipid metabolism; CDP-diacylglycerol biosynthesis; CDP-diacylglycerol from sn-glycerol 3-phosphate: step 2/3. In terms of biological role, plastidial enzyme of the prokaryotic glycerol-3-phosphate pathway that converts lysophosphatidic acid (LPA) into phosphatidic acid by incorporating an acyl moiety at position sn-2. Utilizes palmitoyl-ACP (16:0-ACP) to produce phosphatidic acid containing a saturated group at position sn-2, which is characteristic of lipids synthesized by the prokaryotic pathway. In vitro, can use 16:0-CoA as acyl donor. The polypeptide is 1-acyl-sn-glycerol-3-phosphate acyltransferase BAT2, chloroplastic (Brassica napus (Rape)).